The primary structure comprises 219 residues: Cytidylate kinase (219 aa).

15–23 (GPAASGKGT) contributes to the ATP binding site.

The protein belongs to the cytidylate kinase family. Type 1 subfamily.

The protein localises to the cytoplasm. It carries out the reaction CMP + ATP = CDP + ADP. It catalyses the reaction dCMP + ATP = dCDP + ADP. The sequence is that of Cytidylate kinase from Brucella melitensis biotype 1 (strain ATCC 23456 / CCUG 17765 / NCTC 10094 / 16M).